The sequence spans 255 residues: 5'-nucleotidase SurE (255 aa).

Residues D8, D9, S40, and N93 each coordinate a divalent metal cation.

It belongs to the SurE nucleotidase family. A divalent metal cation is required as a cofactor.

It localises to the cytoplasm. The catalysed reaction is a ribonucleoside 5'-phosphate + H2O = a ribonucleoside + phosphate. Its function is as follows. Nucleotidase that shows phosphatase activity on nucleoside 5'-monophosphates. This Nitrobacter winogradskyi (strain ATCC 25391 / DSM 10237 / CIP 104748 / NCIMB 11846 / Nb-255) protein is 5'-nucleotidase SurE.